We begin with the raw amino-acid sequence, 546 residues long: Glucose-6-phosphate isomerase (546 aa).

The active-site Proton donor is Glu356. Active-site residues include His387 and Lys507.

Belongs to the GPI family.

The protein resides in the cytoplasm. It catalyses the reaction alpha-D-glucose 6-phosphate = beta-D-fructose 6-phosphate. The protein operates within carbohydrate biosynthesis; gluconeogenesis. Its pathway is carbohydrate degradation; glycolysis; D-glyceraldehyde 3-phosphate and glycerone phosphate from D-glucose: step 2/4. Its function is as follows. Catalyzes the reversible isomerization of glucose-6-phosphate to fructose-6-phosphate. This chain is Glucose-6-phosphate isomerase, found in Syntrophus aciditrophicus (strain SB).